We begin with the raw amino-acid sequence, 242 residues long: Glucosamine-6-phosphate deaminase (242 aa).

Asp-67 functions as the Proton acceptor; for enolization step in the catalytic mechanism. The For ring-opening step role is filled by Asn-136. His-138 serves as the catalytic Proton acceptor; for ring-opening step. Glu-143 acts as the For ring-opening step in catalysis.

Belongs to the glucosamine/galactosamine-6-phosphate isomerase family. NagB subfamily.

It catalyses the reaction alpha-D-glucosamine 6-phosphate + H2O = beta-D-fructose 6-phosphate + NH4(+). It functions in the pathway amino-sugar metabolism; N-acetylneuraminate degradation; D-fructose 6-phosphate from N-acetylneuraminate: step 5/5. Its function is as follows. Catalyzes the reversible isomerization-deamination of glucosamine 6-phosphate (GlcN6P) to form fructose 6-phosphate (Fru6P) and ammonium ion. The sequence is that of Glucosamine-6-phosphate deaminase from Clostridium perfringens (strain 13 / Type A).